A 158-amino-acid polypeptide reads, in one-letter code: Transcription elongation factor GreA (158 aa).

Belongs to the GreA/GreB family.

Functionally, necessary for efficient RNA polymerase transcription elongation past template-encoded arresting sites. The arresting sites in DNA have the property of trapping a certain fraction of elongating RNA polymerases that pass through, resulting in locked ternary complexes. Cleavage of the nascent transcript by cleavage factors such as GreA or GreB allows the resumption of elongation from the new 3'terminus. GreA releases sequences of 2 to 3 nucleotides. This chain is Transcription elongation factor GreA, found in Methylobacterium nodulans (strain LMG 21967 / CNCM I-2342 / ORS 2060).